The primary structure comprises 2798 residues: Nipped-B-like protein (2798 aa).

2 stretches are compositionally biased toward polar residues: residues 128–173 (LSQN…QNSP) and 191–208 (HPSS…SVSS). The tract at residues 128–338 (LSQNSMHSSP…IKLGKDEKDQ (211 aa)) is disordered. A phosphoserine mark is found at serine 150 and serine 162. Residues 234-249 (HHADNPRHGSSDDYLH) are compositionally biased toward basic and acidic residues. Serine 243, serine 256, serine 274, serine 280, serine 284, serine 301, serine 306, serine 318, and serine 350 each carry phosphoserine. Residues 482–500 (RESAIERERFSKEVQDKDK) are compositionally biased toward basic and acidic residues. A disordered region spans residues 482-940 (RESAIERERF…NKAEFPSYLL (459 aa)). A compositionally biased stretch (polar residues) spans 523 to 534 (PASQETGSTGNG). Composition is skewed to basic and acidic residues over residues 562–572 (DSIKKPEETKQ), 593–625 (PENH…ESKP), 634–663 (KSNE…ESKQ), 672–685 (KQNE…KPND), and 694–899 (ENTK…DTNK). Phosphothreonine is present on residues threonine 713 and threonine 746. The residue at position 906 (serine 906) is a Phosphoserine. A compositionally biased stretch (basic and acidic residues) spans 908-933 (NSKDDKRTEGNRSKVDSNKAHTDNKA). The short motif at 990–1003 (NKGAKPVVVLQKLS) is the PxVxL motif element. 2 disordered regions span residues 1011 to 1041 (IKDR…DQSV) and 1054 to 1186 (ESTM…TPEE). Lysine 1076 is subject to N6-acetyllysine. Phosphoserine is present on residues serine 1083, serine 1084, and serine 1090. A compositionally biased stretch (acidic residues) spans 1083–1094 (SSDEDNDSDEAF). Residues 1103-1133 (KDDDKAWEYEERDRRSSGDHRRSGHSHDGRR) show a composition bias toward basic and acidic residues. Serine 1144, serine 1146, and serine 1148 each carry phosphoserine. Phosphotyrosine is present on tyrosine 1153. Serine 1154 is modified (phosphoserine). The segment covering 1165–1176 (KMKKKEKQKKRK) has biased composition (basic residues). Threonine 1183 is modified (phosphothreonine). Residue serine 1191 is modified to Phosphoserine. Over residues 1685–1705 (AMKSQKDEESSDATHHAKELE) the composition is skewed to basic and acidic residues. Positions 1685–1706 (AMKSQKDEESSDATHHAKELET) are disordered. HEAT repeat units follow at residues 1761–1799 (AQSF…VDPS), 1837–1875 (PQLA…EQPT), 1939–1978 (YDWF…HILK), 2221–2261 (VNLK…LKEM), and 2307–2345 (LIHP…KYAG). Basic and acidic residues predominate over residues 2467–2483 (VKDKRKERKTSPAKENE). 2 disordered regions span residues 2467–2514 (VKDK…DDIN) and 2645–2690 (TSLL…DSTE). Phosphoserine is present on residues serine 2487, serine 2503, serine 2505, serine 2507, serine 2509, serine 2646, and serine 2652. Acidic residues predominate over residues 2504-2513 (ESDSDSEDDI). Position 2661 is a phosphothreonine (threonine 2661). Serine 2666 is subject to Phosphoserine.

This sequence belongs to the SCC2/Nipped-B family. As to quaternary structure, heterodimerizes with MAU2/SCC4 to form the cohesin loading complex. The NIPBL-MAU2 heterodimer interacts with the cohesin complex composed of SMC1A/B and SMC3 heterodimer, RAD21 and STAG1/SA1. NIPBL directly contacts all members of the complex, RAD21, SMC1A/B, SMC3 and STAG1. Interacts directly (via PxVxL motif) with CBX3 and CBX5. Interacts with ZNF609 (via N-terminus). Interacts with the multiprotein complex Integrator. Interacts with BRD4. As to expression, spermatocytes and oocytes (at protein level).

It is found in the nucleus. Its subcellular location is the chromosome. Functionally, plays an important role in the loading of the cohesin complex on to DNA. Forms a heterodimeric complex (also known as cohesin loading complex) with MAU2/SCC4 which mediates the loading of the cohesin complex onto chromatin. Plays a role in cohesin loading at sites of DNA damage. Its recruitment to double-strand breaks (DSBs) sites occurs in a CBX3-, RNF8- and RNF168-dependent manner whereas its recruitment to UV irradiation-induced DNA damage sites occurs in a ATM-, ATR-, RNF8- and RNF168-dependent manner. Along with ZNF609, promotes cortical neuron migration during brain development by regulating the transcription of crucial genes in this process. Preferentially binds promoters containing paused RNA polymerase II. Up-regulates the expression of SEMA3A, NRP1, PLXND1 and GABBR2 genes, among others. The sequence is that of Nipped-B-like protein (Nipbl) from Mus musculus (Mouse).